A 319-amino-acid chain; its full sequence is Protein MGF 360-8L (319 aa).

The protein belongs to the asfivirus MGF 360 family.

Plays a role in virus cell tropism, and may be required for efficient virus replication in macrophages. The sequence is that of Protein MGF 360-8L from Ornithodoros (relapsing fever ticks).